The primary structure comprises 249 residues: Quinate/shikimate dehydrogenase (249 aa).

Substrate is bound by residues K32 and D68. NAD(+) contacts are provided by residues A93 to A96, N116 to D119, K166, C193 to N196, and G216.

It belongs to the shikimate dehydrogenase family. Homodimer.

The enzyme catalyses L-quinate + NAD(+) = 3-dehydroquinate + NADH + H(+). It carries out the reaction L-quinate + NADP(+) = 3-dehydroquinate + NADPH + H(+). The catalysed reaction is shikimate + NADP(+) = 3-dehydroshikimate + NADPH + H(+). It catalyses the reaction shikimate + NAD(+) = 3-dehydroshikimate + NADH + H(+). It functions in the pathway metabolic intermediate biosynthesis; chorismate biosynthesis; chorismate from D-erythrose 4-phosphate and phosphoenolpyruvate: step 4/7. The actual biological function of YdiB remains unclear, nor is it known whether 3-dehydroshikimate or quinate represents the natural substrate. Catalyzes the reversible NAD-dependent reduction of both 3-dehydroshikimate (DHSA) and 3-dehydroquinate to yield shikimate (SA) and quinate, respectively. It can use both NAD or NADP for catalysis, however it has higher catalytic efficiency with NAD. The polypeptide is Quinate/shikimate dehydrogenase (Shigella flexneri serotype 5b (strain 8401)).